A 501-amino-acid polypeptide reads, in one-letter code: ATP synthase subunit alpha (501 aa).

169–176 (GDRQTGKT) provides a ligand contact to ATP.

Belongs to the ATPase alpha/beta chains family. As to quaternary structure, F-type ATPases have 2 components, CF(1) - the catalytic core - and CF(0) - the membrane proton channel. CF(1) has five subunits: alpha(3), beta(3), gamma(1), delta(1), epsilon(1). CF(0) has three main subunits: a(1), b(2) and c(9-12). The alpha and beta chains form an alternating ring which encloses part of the gamma chain. CF(1) is attached to CF(0) by a central stalk formed by the gamma and epsilon chains, while a peripheral stalk is formed by the delta and b chains.

The protein localises to the cell membrane. It carries out the reaction ATP + H2O + 4 H(+)(in) = ADP + phosphate + 5 H(+)(out). Functionally, produces ATP from ADP in the presence of a proton gradient across the membrane. The alpha chain is a regulatory subunit. This chain is ATP synthase subunit alpha, found in Streptococcus pneumoniae serotype 19F (strain G54).